The sequence spans 1098 residues: Probable DNA-directed RNA polymerase (1098 aa).

The span at 1–24 shows a compositional bias: basic and acidic residues; that stretch reads PIRESVRVSTDRDPDLEDEKREQL. A disordered region spans residues 1 to 26; sequence PIRESVRVSTDRDPDLEDEKREQLGE. Residues aspartate 663, lysine 750, and aspartate 915 contribute to the active site.

Belongs to the phage and mitochondrial RNA polymerase family.

The protein resides in the mitochondrion. The enzyme catalyses RNA(n) + a ribonucleoside 5'-triphosphate = RNA(n+1) + diphosphate. Its function is as follows. DNA-dependent RNA polymerase catalyzes the transcription of DNA into RNA using the four ribonucleoside triphosphates as substrates. This is Probable DNA-directed RNA polymerase from Zea mays (Maize).